Reading from the N-terminus, the 191-residue chain is MILITDSAQEHFAKLLSKQEDGTQIRVFVINPGTPTAECGVSYCPPDAVEATDTELKFDKLSAFVDELSAPYLQDAEIDFVTDNLGSQLTLKAPNAKMRKVSDDAPLIERVEYLLQAQINPQLASHGGKVSLMEITDEGYAILQFGGGCNGCSMVDVTLKEGIEKEMLAAFPELKGVRDLTEHQRGEHSFY.

[4Fe-4S] cluster-binding residues include cysteine 149 and cysteine 152.

This sequence belongs to the NfuA family. In terms of assembly, homodimer. [4Fe-4S] cluster serves as cofactor.

Involved in iron-sulfur cluster biogenesis. Binds a 4Fe-4S cluster, can transfer this cluster to apoproteins, and thereby intervenes in the maturation of Fe/S proteins. Could also act as a scaffold/chaperone for damaged Fe/S proteins. The polypeptide is Fe/S biogenesis protein NfuA (Erwinia tasmaniensis (strain DSM 17950 / CFBP 7177 / CIP 109463 / NCPPB 4357 / Et1/99)).